Reading from the N-terminus, the 383-residue chain is Multidrug resistance protein MexA (383 aa).

Positions 1-23 are cleaved as a signal peptide; the sequence is MQRTPAMRVLVPALLVAISALSG. The N-palmitoyl cysteine moiety is linked to residue Cys-24. Residue Cys-24 is the site of S-diacylglycerol cysteine attachment. Positions 97-151 form a coiled coil; sequence ATYEADYQSAQANLASTQEQAQRYKLLVADQAVSKQQYADANAAYLQSKAAVEQA.

This sequence belongs to the membrane fusion protein (MFP) (TC 8.A.1) family. Component of the MexAB-OprM multidrug efflux complex, composed of six MexA subunits forming a hexameric tube, binding to a MexB trimer, which interact with the trimeric OprM outer membrane channel protein. OprM is thought to not directly contact MexB; instead, MexA joins MexB and OprM by forming a funnel-like hexamer anchored to the inner membrane. MexA may initially form a hexameric ring complex with MexB prior to OprM, then OprM undergoes a conformational change as it contacts MexA, allowing the periplasmic gate to open. It is thought that, under high intracellular substrate concentration, MexB ejects substrate into the tunnel formed by MexA-OprM; as the substrate level declines, conformational changes in MexB cause efflux to reduce and stop and the complex shifts to the closed state. MexB subunit acts as a substrate:proton antiporter and activity is enhanced significantly when in complex with MexA and OprM, in vitro.

It localises to the cell inner membrane. Its activity is regulated as follows. Export of antibiotics and solvents is dramatically decreased in the presence of the protonophore carbonyl cyanide m-chlorophenylhydrazone (CCCP), therefore may be driven by a proton gradient. Antibiotic efflux is inhibited by pyridopyrimidine derivatives, such as ABI-PP, acting by binding to a hydrophobic pocket in MexB. Functionally, the periplasmic linker component of the MexAB-OprM efflux system that confers multidrug resistance. Functions as the major efflux pump for n-hexane and p-xylene efflux. Has been shown in one study to be involved in the active efflux of the autoinducer N-(3-oxododecanoyl) homoserine lactone, thereby playing an indirect role in quorum-sensing; but has been shown in another study not to be involved in efflux of this autoinducer. Over-expression of the pump increases antibiotic and solvent efflux capacities. Implicated in the secretion of the siderophore pyoverdine. This Pseudomonas aeruginosa (strain ATCC 15692 / DSM 22644 / CIP 104116 / JCM 14847 / LMG 12228 / 1C / PRS 101 / PAO1) protein is Multidrug resistance protein MexA (mexA).